Reading from the N-terminus, the 76-residue chain is uncharacterized protein (76 aa).

This is an uncharacterized protein from Thermoproteus tenax virus 1 (strain KRA1) (TTV1).